Reading from the N-terminus, the 355-residue chain is UDP-N-acetylglucosamine--N-acetylmuramyl-(pentapeptide) pyrophosphoryl-undecaprenol N-acetylglucosamine transferase (355 aa).

UDP-N-acetyl-alpha-D-glucosamine contacts are provided by residues 13 to 15 (TGG), Asn-125, Arg-162, Ser-190, Ile-244, and Gln-289.

The protein belongs to the glycosyltransferase 28 family. MurG subfamily.

Its subcellular location is the cell inner membrane. The enzyme catalyses di-trans,octa-cis-undecaprenyl diphospho-N-acetyl-alpha-D-muramoyl-L-alanyl-D-glutamyl-meso-2,6-diaminopimeloyl-D-alanyl-D-alanine + UDP-N-acetyl-alpha-D-glucosamine = di-trans,octa-cis-undecaprenyl diphospho-[N-acetyl-alpha-D-glucosaminyl-(1-&gt;4)]-N-acetyl-alpha-D-muramoyl-L-alanyl-D-glutamyl-meso-2,6-diaminopimeloyl-D-alanyl-D-alanine + UDP + H(+). It functions in the pathway cell wall biogenesis; peptidoglycan biosynthesis. Its function is as follows. Cell wall formation. Catalyzes the transfer of a GlcNAc subunit on undecaprenyl-pyrophosphoryl-MurNAc-pentapeptide (lipid intermediate I) to form undecaprenyl-pyrophosphoryl-MurNAc-(pentapeptide)GlcNAc (lipid intermediate II). The chain is UDP-N-acetylglucosamine--N-acetylmuramyl-(pentapeptide) pyrophosphoryl-undecaprenol N-acetylglucosamine transferase from Neisseria meningitidis serogroup C (strain 053442).